Reading from the N-terminus, the 258-residue chain is Regulatory protein RecX (258 aa).

This sequence belongs to the RecX family.

The protein resides in the cytoplasm. Modulates RecA activity. In Streptococcus sanguinis (strain SK36), this protein is Regulatory protein RecX.